The following is a 145-amino-acid chain: 3-hydroxyacyl-[acyl-carrier-protein] dehydratase FabZ (145 aa).

Histidine 49 is a catalytic residue.

The protein belongs to the thioester dehydratase family. FabZ subfamily.

Its subcellular location is the cytoplasm. It carries out the reaction a (3R)-hydroxyacyl-[ACP] = a (2E)-enoyl-[ACP] + H2O. In terms of biological role, involved in unsaturated fatty acids biosynthesis. Catalyzes the dehydration of short chain beta-hydroxyacyl-ACPs and long chain saturated and unsaturated beta-hydroxyacyl-ACPs. In Anaplasma phagocytophilum (strain HZ), this protein is 3-hydroxyacyl-[acyl-carrier-protein] dehydratase FabZ.